The primary structure comprises 1047 residues: MRLLKPAWVHHDDKQIFSVDIHKDCTKFATGGQGSDCGRVVIWNLLPVLSDKAEFDADVPKMLCQMDQHLACVNCVRWSQNGQNLASGSDDKLIMIWRKSAGSSGVFGTGGMQKNHESWKCFYTLRGHDGDVLDLAWSPNDVYLASCSIDNTVIIWDAQAFPHSVATLKGHTGLVKGVSWDPLGRFLASQSDDRSIKIWNTMNWSLSHTITEPFEECGGTTHILRLSWSPDGQYLVSAHAMNGGGPTAQIIEREGWKCDKDFVGHRKAVTCVRFHNSILSRQENDGSPSKPLQYCCLAVGSRDRSLSVWMTALQRPMVVIHELFNASILDLTWGPQECLLMACSVDGSIACLKFTEEELGKAISEEEQNAIIRKMYGKNYVNGLGKSAPVLEHPQRLLLPQGDKPTKFPLSNNNEANQRPISKQTETRTKDGKRRITPMFIPLHEDGPTSLSMNIVSSSGSSTTALTSCSAAIGTLPAAAPTESAATPLMPLEPLVSKIDLGRLDSRLKTQPASQRRQSLPFDPGQSNELLRTPRLEEHQSSTCSPSNLNVTATGKSEFVKAALDYRLHVSNGHLKTQHGMLAKVTASDSKEMLWEFYVGSPLVNLNLCEKYAMLCSLDGSMRLISMETGCPVFPAISLTSSAVHCAFSPDNSLVGVLTECGLLRIWDIAKKVVSLAAGCLELLNKHGTAAQFSVTNQGMPLIGFPSGNSYSYSTSLQSWLVLATKDAIMYHGIRGTLPRDMDQMQQKFPLLSMQASSQNYFSFTGSMELRHSESWQQCAKIRFIENQIKLCEALQSLDELQHWHKMLTFQLATHGSEKRMRVFLDDLLSMPEPGISQFVPKLELMQCVLDTLKPHSEWNRLHSEYTELLKECKSERQKDIFATPAPPQQKTASSAGSSPRSGEATGEEVTEKDGATAVAAAVVAGSRMAVTTGTSTTTTTTASSSLSSSGSSSSTSGSGSSSSSSSTSSLSVPQPAPSLSPEIQTLDSPTVCIDDEILSASSSLPPLDTSPVEVSPASTSGGAASTSPAASVAGSAPVSSSKTDQT.

WD repeat units follow at residues 11–53 (HDDK…SDKA), 68–107 (QHLACVNCVRWSQNGQNLASGSDDKLIMIWRKSAGSSGVF), 127–166 (GHDGDVLDLAWSPNDVYLASCSIDNTVIIWDAQAFPHSVA), 170–209 (GHTGLVKGVSWDPLGRFLASQSDDRSIKIWNTMNWSLSHT), 218–263 (GGTT…KDFV), 264–319 (GHRK…PMVV), and 323–364 (LFNA…KAIS). Disordered regions lie at residues 401-435 (QGDKPTKFPLSNNNEANQRPISKQTETRTKDGKRR), 509-549 (KTQP…PSNL), 882-914 (FATPAPPQQKTASSAGSSPRSGEATGEEVTEKD), and 933-1047 (TGTS…TDQT). Composition is skewed to polar residues over residues 409–424 (PLSNNNEANQRPISKQ) and 509–518 (KTQPASQRRQ). Ser-519 is subject to Phosphoserine. Positions 889–901 (QQKTASSAGSSPR) are enriched in polar residues. Composition is skewed to low complexity over residues 933–972 (TGTSTTTTTTASSSLSSSGSSSSTSGSGSSSSSSSTSSLS) and 1015–1047 (VSPASTSGGAASTSPAASVAGSAPVSSSKTDQT).

The protein belongs to the WD repeat HIR1 family.

The protein resides in the nucleus. Required for the periodic repression of histone gene transcription during the cell cycle. Required for replication-independent chromatin assembly. Promotes remodeling of sperm chromatin following fertilization via the incorporation of histone H3.3 and histone H4. The sequence is that of Protein HIRA homolog (Hira) from Drosophila melanogaster (Fruit fly).